A 208-amino-acid polypeptide reads, in one-letter code: FMN-dependent NADH:quinone oxidoreductase 1 (208 aa).

The protein belongs to the azoreductase type 1 family. In terms of assembly, homodimer. FMN serves as cofactor.

It carries out the reaction 2 a quinone + NADH + H(+) = 2 a 1,4-benzosemiquinone + NAD(+). The catalysed reaction is N,N-dimethyl-1,4-phenylenediamine + anthranilate + 2 NAD(+) = 2-(4-dimethylaminophenyl)diazenylbenzoate + 2 NADH + 2 H(+). Its function is as follows. Quinone reductase that provides resistance to thiol-specific stress caused by electrophilic quinones. In terms of biological role, also exhibits azoreductase activity. Catalyzes the reductive cleavage of the azo bond in aromatic azo compounds to the corresponding amines. This is FMN-dependent NADH:quinone oxidoreductase 1 from Bacillus thuringiensis subsp. konkukian (strain 97-27).